Reading from the N-terminus, the 149-residue chain is Large ribosomal subunit protein bL9 (149 aa).

Belongs to the bacterial ribosomal protein bL9 family.

In terms of biological role, binds to the 23S rRNA. This chain is Large ribosomal subunit protein bL9, found in Helicobacter pylori (strain ATCC 700392 / 26695) (Campylobacter pylori).